A 1011-amino-acid polypeptide reads, in one-letter code: Translation initiation factor IF-2 (1011 aa).

A compositionally biased stretch (basic and acidic residues) spans 49–77 (YIHEHGTEESPRRRSAGEDEFKPKIDLSK). 2 disordered regions span residues 49–152 (YIHE…RFIT) and 187–407 (AAPA…LSLS). A compositionally biased stretch (pro residues) spans 93–104 (APPPPPPPPPRP). Residues 105–115 (AVKAPSPVSQE) show a composition bias toward low complexity. The segment covering 116–126 (PRPPAVPPAPQ) has biased composition (pro residues). Low complexity-rich tracts occupy residues 187-212 (AAPA…KAPV) and 228-242 (TAKP…AATP). 2 stretches are compositionally biased toward pro residues: residues 243–252 (APTPGRPLPG) and 276–290 (SAPP…PPPQ). Gly residues predominate over residues 316–329 (GPGGGSGGPGGFQR). Residues 361–380 (LAPPGAPANKPAGRPAPARR) show a composition bias toward low complexity. The region spanning 502 to 678 (VRPPVVTIMG…CLVADLGDLK (177 aa)) is the tr-type G domain. A G1 region spans residues 511-518 (GHVDHGKT). 511-518 (GHVDHGKT) lines the GTP pocket. The segment at 536–540 (GITQH) is G2. The G3 stretch occupies residues 564 to 567 (DTPG). Residues 564-568 (DTPGH) and 618-621 (NKID) each bind GTP. A G4 region spans residues 618–621 (NKID). The G5 stretch occupies residues 654-656 (SAK).

This sequence belongs to the TRAFAC class translation factor GTPase superfamily. Classic translation factor GTPase family. IF-2 subfamily.

It is found in the cytoplasm. Its function is as follows. One of the essential components for the initiation of protein synthesis. Protects formylmethionyl-tRNA from spontaneous hydrolysis and promotes its binding to the 30S ribosomal subunits. Also involved in the hydrolysis of GTP during the formation of the 70S ribosomal complex. The sequence is that of Translation initiation factor IF-2 from Koribacter versatilis (strain Ellin345).